The primary structure comprises 427 residues: Serine--tRNA ligase (427 aa).

An L-serine-binding site is contributed by 233–235 (TAE). 264–266 (RSE) contacts ATP. Glu287 is a binding site for L-serine. 351-354 (EISS) provides a ligand contact to ATP. Ser386 lines the L-serine pocket.

This sequence belongs to the class-II aminoacyl-tRNA synthetase family. Type-1 seryl-tRNA synthetase subfamily. In terms of assembly, homodimer. The tRNA molecule binds across the dimer.

Its subcellular location is the cytoplasm. The enzyme catalyses tRNA(Ser) + L-serine + ATP = L-seryl-tRNA(Ser) + AMP + diphosphate + H(+). It carries out the reaction tRNA(Sec) + L-serine + ATP = L-seryl-tRNA(Sec) + AMP + diphosphate + H(+). It participates in aminoacyl-tRNA biosynthesis; selenocysteinyl-tRNA(Sec) biosynthesis; L-seryl-tRNA(Sec) from L-serine and tRNA(Sec): step 1/1. In terms of biological role, catalyzes the attachment of serine to tRNA(Ser). Is also able to aminoacylate tRNA(Sec) with serine, to form the misacylated tRNA L-seryl-tRNA(Sec), which will be further converted into selenocysteinyl-tRNA(Sec). The protein is Serine--tRNA ligase of Dechloromonas aromatica (strain RCB).